The following is a 284-amino-acid chain: Tropomyosin (284 aa).

The segment at 1 to 47 is disordered; the sequence is MDAIKKKMQAMKIEKDNAMDRADAAEEKARQQQERVEKLEEELRDTQ. The stretch at 1 to 284 forms a coiled coil; sequence MDAIKKKMQA…DQTFQELSGY (284 aa). Residues 12–38 are compositionally biased toward basic and acidic residues; that stretch reads KIEKDNAMDRADAAEEKARQQQERVEK.

It belongs to the tropomyosin family. Homodimer.

Tropomyosin, in association with the troponin complex, plays a central role in the calcium dependent regulation of muscle contraction. This is Tropomyosin from Trichinella pseudospiralis (Parasitic roundworm).